A 274-amino-acid polypeptide reads, in one-letter code: ATP synthase subunit delta (274 aa).

This sequence belongs to the ATPase delta chain family. As to quaternary structure, F-type ATPases have 2 components, F(1) - the catalytic core - and F(0) - the membrane proton channel. F(1) has five subunits: alpha(3), beta(3), gamma(1), delta(1), epsilon(1). F(0) has three main subunits: a(1), b(2) and c(10-14). The alpha and beta chains form an alternating ring which encloses part of the gamma chain. F(1) is attached to F(0) by a central stalk formed by the gamma and epsilon chains, while a peripheral stalk is formed by the delta and b chains.

Its subcellular location is the cell membrane. Its function is as follows. F(1)F(0) ATP synthase produces ATP from ADP in the presence of a proton or sodium gradient. F-type ATPases consist of two structural domains, F(1) containing the extramembraneous catalytic core and F(0) containing the membrane proton channel, linked together by a central stalk and a peripheral stalk. During catalysis, ATP synthesis in the catalytic domain of F(1) is coupled via a rotary mechanism of the central stalk subunits to proton translocation. In terms of biological role, this protein is part of the stalk that links CF(0) to CF(1). It either transmits conformational changes from CF(0) to CF(1) or is implicated in proton conduction. This Salinispora tropica (strain ATCC BAA-916 / DSM 44818 / JCM 13857 / NBRC 105044 / CNB-440) protein is ATP synthase subunit delta.